The sequence spans 1343 residues: Kinesin-like protein KIF7 (1343 aa).

A Kinesin motor domain is found at 15 to 349; that stretch reads PVRVALRVRP…LNYASRAQNI (335 aa). 94 to 101 is a binding site for ATP; it reads GQTGSGKT. Disordered regions lie at residues 356–382, 451–483, and 611–639; these read NWRP…RSET, RSAL…RKED, and EVNR…TLHL. The interaction with DLG5 stretch occupies residues 358–479; the sequence is RPEAERPPEE…EDQAAQGAGG (122 aa). Residues 358-1206 are interaction with SMO; it reads RPEAERPPEE…LGRYMWINQE (849 aa). Residues 480 to 542 adopt a coiled-coil conformation; the sequence is RKEDEGAQQL…ELRLRLELVR (63 aa). A sufficient for interaction with NPHP1 region spans residues 513–775; sequence AMEQYKLQSD…LRELEGKELQ (263 aa). 2 coiled-coil regions span residues 698–1057 and 1109–1211; these read ASEW…AAIE and TLRE…KQKL. Ser-898 carries the phosphoserine modification. Disordered stretches follow at residues 1219 to 1238 and 1310 to 1343; these read HSRG…APGN and GEAG…KNPL.

The protein belongs to the TRAFAC class myosin-kinesin ATPase superfamily. Kinesin family. KIF27 subfamily. Can form homodimers and interacts with microtubules. Interacts with GLI1, GLI2, GLI3, SMO and SUFU. Interacts with NPHP1. Interacts with SMO and DLG5 (via PDZ4 or guanylate kinase-like domain). Post-translationally, polyubiquitinated by UBR3. Embryonic stem cells, melanotic melanoma and Jurkat T-cells. Expressed in heart, lung, liver, kidney, testis, retina, placenta, pancreas, colon, small intestin, prostate and thymus.

Its subcellular location is the cell projection. It is found in the cilium. It localises to the cytoplasm. The protein resides in the cytoskeleton. The protein localises to the cilium basal body. Its function is as follows. Essential for hedgehog signaling regulation: acts both as a negative and positive regulator of sonic hedgehog (Shh) and Indian hedgehog (Ihh) pathways, acting downstream of SMO, through both SUFU-dependent and -independent mechanisms. Involved in the regulation of microtubular dynamics. Required for proper organization of the ciliary tip and control of ciliary localization of SUFU-GLI2 complexes. Required for localization of GLI3 to cilia in response to Shh. Negatively regulates Shh signaling by preventing inappropriate activation of the transcriptional activator GLI2 in the absence of ligand. Positively regulates Shh signaling by preventing the processing of the transcription factor GLI3 into its repressor form. In keratinocytes, promotes the dissociation of SUFU-GLI2 complexes, GLI2 nuclear translocation and Shh signaling activation. Involved in the regulation of epidermal differentiation and chondrocyte development. The chain is Kinesin-like protein KIF7 (KIF7) from Homo sapiens (Human).